The sequence spans 91 residues: Potassium channel toxin TstKMK (91 aa).

Residues 1–25 (MVATNRCCVFALLFALLLVHSLTEA) form the signal peptide. The propeptide occupies 26 to 42 (GKGKEILGKIKEKIIEA). In terms of domain architecture, BetaSPN-type CS-alpha/beta spans 58–91 (EYACPAIDKFCEDHCAAKKAVGKCDDFKCKCIKL). Intrachain disulfides connect Cys61/Cys81, Cys68/Cys86, and Cys72/Cys88.

Belongs to the long chain scorpion toxin family. Class 2 subfamily. Expressed by the venom gland.

The protein resides in the secreted. The full peptide presents antibacterial and cytotoxic activities. The synthetic C-terminus (AA 33-76) inhibits voltage-gated potassium channels Kv1.1/KCNA1, Kv1.2/KCNA2, and Kv1.3/KCNA3. This chain is Potassium channel toxin TstKMK, found in Tityus stigmurus (Brazilian scorpion).